The chain runs to 105 residues: Intracellular chorismate mutase (105 aa).

The region spanning 23 to 105 (SQPVPEIDTL…LRLGRGRLGH (83 aa)) is the Chorismate mutase domain. Chorismate-binding residues include arginine 61, valine 70, and glutamate 74.

In terms of assembly, homodimer. Interacts with AroG.

The protein localises to the cytoplasm. The enzyme catalyses chorismate = prephenate. It participates in metabolic intermediate biosynthesis; prephenate biosynthesis; prephenate from chorismate: step 1/1. The formation of the complex with AroG activates the chorismate mutase activity. Functionally, catalyzes the Claisen rearrangement of chorismate to prephenate. Probably involved in the aromatic amino acid biosynthesis. This Mycobacterium bovis (strain ATCC BAA-935 / AF2122/97) protein is Intracellular chorismate mutase.